Consider the following 503-residue polypeptide: MIKQTHVSNSSNNSTNSTAAQVPEMRRVKRIHFVGIGGAGMGGIAEVLLNEGYQISGSDIGENQVVKRLRALGATIVIGHQAENVVQASVIVVSTAINSENPELVKAKELRIPVVRRAEMLAELMRFRHGIAIAGTHGKTTTTSLIASIFAQGKLDPTFVIGGLLNSAGTNARLGSSRYLVAEADESDASFLHLQPMVSVITNIDADHMETYQGDFEKLKDTYIEFLHNLPFYGLAVVCIDNPVVRELLPRISRQVITYGFSKDADVRAVNYQQNGAVSHFTVEVEGQEPLEMSVNLPGQHNVLNALAGVAVAKDEGVNDEAICKALTEFEGIGRRFEKLTDFSTAAGDMVLVDDYGHHPSEVKATILAMRQGWPDKRLVMVFQPHRYSRTRDLYEDFVEVLSEVDCLFLLDVYAAGETPISSADSKSLARSIRLRGQIEPVYVSDVDKLPQLLATQLQDNDMVITQGAGSIGAVARNLADHSLLHTRCSVQPDAQSEVKGDK.

The tract at residues 1 to 22 (MIKQTHVSNSSNNSTNSTAAQV) is disordered. The segment covering 8-18 (SNSSNNSTNST) has biased composition (low complexity). 135 to 141 (GTHGKTT) lines the ATP pocket.

This sequence belongs to the MurCDEF family.

Its subcellular location is the cytoplasm. It catalyses the reaction UDP-N-acetyl-alpha-D-muramate + L-alanine + ATP = UDP-N-acetyl-alpha-D-muramoyl-L-alanine + ADP + phosphate + H(+). The protein operates within cell wall biogenesis; peptidoglycan biosynthesis. Functionally, cell wall formation. The sequence is that of UDP-N-acetylmuramate--L-alanine ligase from Colwellia psychrerythraea (strain 34H / ATCC BAA-681) (Vibrio psychroerythus).